The chain runs to 101 residues: Replication restart protein PriB (101 aa).

The SSB domain maps to Met-1–Thr-101.

This sequence belongs to the PriB family. In terms of assembly, homodimer. Interacts with PriA and DnaT. Component of the replication restart primosome. Primosome assembly occurs via a 'hand-off' mechanism. PriA binds to replication forks, subsequently PriB then DnaT bind; DnaT then displaces ssDNA to generate the helicase loading substrate.

In terms of biological role, involved in the restart of stalled replication forks, which reloads the replicative helicase on sites other than the origin of replication; the PriA-PriB pathway is the major replication restart pathway. During primosome assembly it facilitates complex formation between PriA and DnaT on DNA; stabilizes PriA on DNA. Stimulates the DNA unwinding activity of PriA helicase. This chain is Replication restart protein PriB, found in Shewanella piezotolerans (strain WP3 / JCM 13877).